Consider the following 140-residue polypeptide: Putative pre-16S rRNA nuclease (140 aa).

This sequence belongs to the YqgF nuclease family.

The protein resides in the cytoplasm. Functionally, could be a nuclease involved in processing of the 5'-end of pre-16S rRNA. This Aeromonas hydrophila protein is Putative pre-16S rRNA nuclease.